A 364-amino-acid chain; its full sequence is ATP synthase gamma chain, chloroplastic (364 aa).

A chloroplast-targeting transit peptide spans 1–41 (MACSLSFSSSVSTFHLPTTTQSTQAPPNNATTLPTTNPIQC). The tract at residues 17–36 (PTTTQSTQAPPNNATTLPTT) is disordered. Positions 25 to 36 (APPNNATTLPTT) are enriched in low complexity. C130 is an active-site residue. C240 and C246 are oxidised to a cystine.

Belongs to the ATPase gamma chain family. In terms of assembly, F-type ATPases have 2 components, CF(1) - the catalytic core - and CF(0) - the membrane proton channel. CF(1) has five subunits: alpha(3), beta(3), gamma(1), delta(1), epsilon(1). CF(0) has four main subunits: a, b, b' and c. Disulfide bond; Cys-240 and Cys-246 are known to form a disulfide bridge in the dark which gives rise to an inactive enzyme. Activation can be brought about by a ferredoxin-dependent reduction of the disulfide bond in the light.

Its subcellular location is the plastid. It localises to the chloroplast thylakoid membrane. Its function is as follows. Produces ATP from ADP in the presence of a proton gradient across the membrane. The gamma chain is believed to be important in regulating ATPase activity and the flow of protons through the CF(0) complex. The polypeptide is ATP synthase gamma chain, chloroplastic (ATPC) (Spinacia oleracea (Spinach)).